A 187-amino-acid chain; its full sequence is Large ribosomal subunit protein bL17 (187 aa).

The protein belongs to the bacterial ribosomal protein bL17 family. As to quaternary structure, part of the 50S ribosomal subunit. Contacts protein L32.

The sequence is that of Large ribosomal subunit protein bL17 from Rhodococcus opacus (strain B4).